A 196-amino-acid polypeptide reads, in one-letter code: Molybdenum cofactor guanylyltransferase (196 aa).

Residues 10-12, K23, N51, D69, and D99 each bind GTP; that span reads LAG. D99 is a binding site for Mg(2+).

It belongs to the MobA family. In terms of assembly, monomer. It depends on Mg(2+) as a cofactor.

It is found in the cytoplasm. It carries out the reaction Mo-molybdopterin + GTP + H(+) = Mo-molybdopterin guanine dinucleotide + diphosphate. Transfers a GMP moiety from GTP to Mo-molybdopterin (Mo-MPT) cofactor (Moco or molybdenum cofactor) to form Mo-molybdopterin guanine dinucleotide (Mo-MGD) cofactor. This chain is Molybdenum cofactor guanylyltransferase, found in Shewanella baltica (strain OS155 / ATCC BAA-1091).